The chain runs to 376 residues: UDP-N-acetylglucosamine--N-acetylmuramyl-(pentapeptide) pyrophosphoryl-undecaprenol N-acetylglucosamine transferase (376 aa).

UDP-N-acetyl-alpha-D-glucosamine is bound by residues 11–13 (TGG), Asn117, Arg160, Ser208, and Gln310.

It belongs to the glycosyltransferase 28 family. MurG subfamily.

The protein resides in the cell inner membrane. It carries out the reaction di-trans,octa-cis-undecaprenyl diphospho-N-acetyl-alpha-D-muramoyl-L-alanyl-D-glutamyl-meso-2,6-diaminopimeloyl-D-alanyl-D-alanine + UDP-N-acetyl-alpha-D-glucosamine = di-trans,octa-cis-undecaprenyl diphospho-[N-acetyl-alpha-D-glucosaminyl-(1-&gt;4)]-N-acetyl-alpha-D-muramoyl-L-alanyl-D-glutamyl-meso-2,6-diaminopimeloyl-D-alanyl-D-alanine + UDP + H(+). Its pathway is cell wall biogenesis; peptidoglycan biosynthesis. In terms of biological role, cell wall formation. Catalyzes the transfer of a GlcNAc subunit on undecaprenyl-pyrophosphoryl-MurNAc-pentapeptide (lipid intermediate I) to form undecaprenyl-pyrophosphoryl-MurNAc-(pentapeptide)GlcNAc (lipid intermediate II). The protein is UDP-N-acetylglucosamine--N-acetylmuramyl-(pentapeptide) pyrophosphoryl-undecaprenol N-acetylglucosamine transferase of Rickettsia peacockii (strain Rustic).